A 543-amino-acid polypeptide reads, in one-letter code: Reticulophagy regulator 2 (543 aa).

3 helical membrane-spanning segments follow: residues 12–32 (AGGGPGMGLSLGLGLGLSLGM), 100–120 (SLRPFFLLSVSLLAYFLLDLW), and 204–224 (VPGIMISYIVLLSILLWPLVV). A compositionally biased stretch (basic residues) spans 254–265 (LHHKHDKRKRQG). A disordered region spans residues 254 to 287 (LHHKHDKRKRQGKNAPPGGDEPLAETESESEAEL). The span at 275–285 (PLAETESESEA) shows a compositional bias: acidic residues. A Phosphothreonine modification is found at threonine 279. Serine 281, serine 283, serine 291, and serine 311 each carry phosphoserine. Threonine 334 carries the post-translational modification Phosphothreonine. Disordered stretches follow at residues 336–394 (VSED…DVAA) and 411–486 (HFNG…EEEA). Phosphoserine occurs at positions 337, 344, 347, and 385. The span at 461 to 480 (APSPSILPPVPQDSPQPLPA) shows a compositional bias: pro residues. Residues 490–495 (EDFELL) carry the LIR motif motif. A disordered region spans residues 504–543 (NAELGLEPETPPKPPDAPPLGPDIHSLVQSDQEAQAVAEP). The segment covering 512–524 (ETPPKPPDAPPLG) has biased composition (pro residues).

Belongs to the RETREG family. As to quaternary structure, interacts with ATG8 family modifier proteins MAP1LC3A, MAP1LC3B, MAP1LC3C, GABARAP, GABARAPL1 and GABARAPL2. Shows higher affinity for GABARAPL1 than for MAP1LC3B. Interacts with CANX.

Its subcellular location is the endoplasmic reticulum membrane. In terms of biological role, endoplasmic reticulum (ER)-anchored autophagy regulator which exists in an inactive state under basal conditions but is activated following cellular stress. When activated, induces ER fragmentation and mediates ER delivery into lysosomes through sequestration into autophagosomes via interaction with ATG8 family proteins. Required for collagen quality control in a LIR motif-independent manner. The sequence is that of Reticulophagy regulator 2 from Homo sapiens (Human).